The following is a 176-amino-acid chain: MTNIRKSHPLIKIVNDAFIDLPAPSNISSWWNFGSLLGICLAVQILTGLFLAMHYTSDTATAFNSVTHICRDVNYGWLLRYLHANGASMFFICLYLHIGRGLYYGSYTYTETWNVGVILLFAVMATAFMGYVLPWGQMSSWGATVITNLLSAIPYMGTDLVGWIWGGFSVDKATLT.

The next 3 helical transmembrane spans lie at 33–53 (FGSL…FLAM), 77–98 (WLLR…YLHI), and 113–133 (WNVG…GYVL). Residues H83 and H97 each contribute to the heme b site.

Belongs to the cytochrome b family. In terms of assembly, the cytochrome bc1 complex contains 11 subunits: 3 respiratory subunits (MT-CYB, CYC1 and UQCRFS1), 2 core proteins (UQCRC1 and UQCRC2) and 6 low-molecular weight proteins (UQCRH/QCR6, UQCRB/QCR7, UQCRQ/QCR8, UQCR10/QCR9, UQCR11/QCR10 and a cleavage product of UQCRFS1). This cytochrome bc1 complex then forms a dimer. Requires heme b as cofactor.

It localises to the mitochondrion inner membrane. Functionally, component of the ubiquinol-cytochrome c reductase complex (complex III or cytochrome b-c1 complex) that is part of the mitochondrial respiratory chain. The b-c1 complex mediates electron transfer from ubiquinol to cytochrome c. Contributes to the generation of a proton gradient across the mitochondrial membrane that is then used for ATP synthesis. The protein is Cytochrome b (MT-CYB) of Eumops glaucinus (Wagner's mastiff bat).